A 722-amino-acid chain; its full sequence is Polyribonucleotide nucleotidyltransferase (722 aa).

Mg(2+) contacts are provided by aspartate 487 and aspartate 493. Positions 554-613 (PRMVSFKIHPDKIREVIGKGGATIQALTKETGCSIDIKDDGTVTIASTSAEGMAEAKARI) constitute a KH domain. The S1 motif domain maps to 623–691 (GKIYEGPVVK…ERGRLRLSLK (69 aa)).

It belongs to the polyribonucleotide nucleotidyltransferase family. The cofactor is Mg(2+).

Its subcellular location is the cytoplasm. It carries out the reaction RNA(n+1) + phosphate = RNA(n) + a ribonucleoside 5'-diphosphate. Functionally, involved in mRNA degradation. Catalyzes the phosphorolysis of single-stranded polyribonucleotides processively in the 3'- to 5'-direction. The sequence is that of Polyribonucleotide nucleotidyltransferase from Polynucleobacter necessarius subsp. necessarius (strain STIR1).